Here is a 319-residue protein sequence, read N- to C-terminus: GPI-specific phospholipase A2-like PGAP3 (319 aa).

The N-terminal stretch at 1 to 23 (MAGRTARLVLLAGAAALASGSQG) is a signal peptide. The Lumenal portion of the chain corresponds to 24-101 (DREPVYRDCV…GKWPFSRFLC (78 aa)). N40 is a glycosylation site (N-linked (GlcNAc...) asparagine). Residues 102 to 122 (FQEPASAVASFLNGLASLVML) form a helical membrane-spanning segment. Topologically, residues 123 to 135 (CRYRTSVPASSPM) are cytoplasmic. The helical transmembrane segment at 136 to 156 (YPTCVAFAWVSLNAWFWSTVF) threads the bilayer. Residues 157–169 (HTRDTDLTEKMDY) are Lumenal-facing. A helical transmembrane segment spans residues 170-190 (FCASTVILHSIYLCCVRTVGL). At 191–200 (QHPAMASAFR) the chain is on the cytoplasmic side. A helical membrane pass occupies residues 201–221 (ALLLLLLTAHVSYLSLIHFDY). At 222–224 (GYN) the chain is on the lumenal side. A helical membrane pass occupies residues 225-245 (MAANVAIGLLNAAWWLAWCLW). Residues 246–257 (NQRLPHVHKCVA) lie on the Cytoplasmic side of the membrane. The chain crosses the membrane as a helical span at residues 258-278 (VVLLLQGLSLLELLDFPPLFW). The Lumenal portion of the chain corresponds to 279 to 281 (VLD). A helical transmembrane segment spans residues 282–302 (AHAIWHISTIPVHVLFFSFLE). Residues 303-319 (DDSLYLLKESEAKVKLD) lie on the Cytoplasmic side of the membrane.

The protein belongs to the PGAP3 family.

Its subcellular location is the golgi apparatus membrane. Involved in the fatty acid remodeling steps of GPI-anchor maturation where the unsaturated acyl chain at sn-2 of inositol phosphate is replaced by a saturated stearoyl chain. May catalyze the first step of the fatty acid remodeling, by removing the unsaturated acyl chain at sn-2 of inositol phosphate, generating a lyso-GPI intermediate. The fatty acid remodeling steps is critical for the integration of GPI-APs into lipid rafts. The polypeptide is GPI-specific phospholipase A2-like PGAP3 (Bos taurus (Bovine)).